Here is a 1604-residue protein sequence, read N- to C-terminus: MVIKKPFIFIFICFLICLLICIDLTNCNTINNNNNNNNNNNNNNNNNNNNNNNNNNNNNNNNNNNNNDNNENHKILKDYLKFTKRFKKSEYPTTEQQDFYINKIKKEIKDREKYKNNIENEILKINSQKKRKKFKRKDLNTDIKTNHEQLRKLIENNVNPNPHYYDETQSFYFTNRMTSNNEKNNKKNLNFNNDNNKINNLINIKNNNIPYINNNNNNNNNNNNNNNNNNKNNNNNNNNKNNNNNNNNKNNNNNNNNKNNNKNKKIIINNNNLINNKLVSETSANMTTMVNSGDASLRSLINFLTTQDNNGLRFFPYSPRDLINPFNATKAISVAFAYNDRQLITPGAFSKENEEIRANQSRSQGLFDPNSPNMNFSSFYDIIDQQQTNFVQNIELSIDYLLNQVYFKEIFSKKDFKTQARDFEALFEFLKQQGTRVVYYYIANDGSNHVECGGSIKPCQDLAYLLQSVPMADRIQTDLVVFFYPGRYNITKRIVIDNFSKVQLVGLFGKDETTLTSNQKMFLFNNTHIHMIGLTIADVNFQMKPLLNIFKTDNLGTGTVFDLRQSIMTILLCDFRNISNRNSLGSVFAYNSNLTVSNTLFENTIAAVGGGIFCCSYSTCIVSNCTFRANIADNPIGGGALIASLSTLFITQSAFYNNKASIGGSVIIDGGFSTVDTSTFEYNTGFVGSAIQISPNSIVYIVNCYFYFNLATYSGASIFCGSSTVVFISKCIFKDNYSPGANGLESYSEKLVLIEESVFEGNIPPLLNSTSVVSIASPSAFLFVRQCSFFGHSGVIFNIGNPSVLYCSFSLFYENSNRIVNSFNNGLIVFGSCKLFNNSNNKSDGIFRINNRSNGIFYAVEFYNNTVSSFFESWFNSTCFLLSSNITNNTFRAGSFQVAFSTDIFVDNLLYSNNTAAEGGLISSDQTGGISVTNSLLIGNTAEFGNLVFFRLLSYSEPNCDSFIFENNTYVDNYAFMAGTIVYFDDTIRCNYSCINCVSVNNNAQYGEIVNTGFATFSSTLPNTIPPSIIRPIILQAFDALGLPYLGRSDITFNLLINLLICDQMSLTGVVQSTSTPTSFSVFYNVRISGAPGTHCNLTVIAFLKTFKNITLEYPITVVNCQEGQDPYNIGGVNSYYCLTDVSKTKIAKIIIGISAIIVSIGVLITAILTFIYRKRKIMRYSNPVFLLIILVGCVCGLVSTFVSFSTTSATCSIRMVLIPLFFFIITSAIFIKQYRVYCLIRGVEELHDMSIENSYLLKLQSFILIIPAILIAVSVIATRMHRKYNFDLQKETIQAYCYSKNFYIIFICLALYEFSILLYGCWIVIKCRQYRSFPGSFNEFFYIGVLIYVLTVILVVSIPIGFALLNSALTDFLLYSIPILVLIVAIIGLLFAPKFYFLFRTDKVIANLRQLIEDQEEILKKNKEVLFTYGMYLGDNNNDIIALHESFSDSDILSKTGSNTSDDVSDDFTFDSPTTYSNIPIPLNRRNNNNNNINNNNNNNNNNNNNNNNNNNNNNNNNILNNNKNNNNDDDASSSNSSSTADFEISSSGESGRSSNDYDKRNNKKNRRKNSLRTPILNSLLSPNSRNKTKKRNKSSQNSPLLD.

A signal peptide spans 1–27 (MVIKKPFIFIFICFLICLLICIDLTNC). The Extracellular segment spans residues 28–1149 (NTINNNNNNN…TDVSKTKIAK (1122 aa)). The segment covering 38–69 (NNNNNNNNNNNNNNNNNNNNNNNNNNNNNNDN) has biased composition (low complexity). A disordered region spans residues 38-72 (NNNNNNNNNNNNNNNNNNNNNNNNNNNNNNDNNEN). Positions 98-133 (DFYINKIKKEIKDREKYKNNIENEILKINSQKKRKK) form a coiled coil. The interval 213–263 (NNNNNNNNNNNNNNNNNNKNNNNNNNNKNNNNNNNNKNNNNNNNNKNNNKN) is disordered. Asn285, Asn327, Asn359, Asn375, Asn489, Asn498, Asn525, Asn577, Asn593, Asn624, Asn768, Asn837, Asn841, Asn851, Asn864, Asn876, Asn885, Asn888, Asn913, Asn967, Asn991, Asn1097, and Asn1109 each carry an N-linked (GlcNAc...) asparagine glycan. Residues 1150 to 1170 (IIIGISAIIVSIGVLITAILT) traverse the membrane as a helical segment. The Cytoplasmic portion of the chain corresponds to 1171-1184 (FIYRKRKIMRYSNP). A helical transmembrane segment spans residues 1185 to 1205 (VFLLIILVGCVCGLVSTFVSF). The Extracellular segment spans residues 1206-1211 (STTSAT). Residues 1212–1232 (CSIRMVLIPLFFFIITSAIFI) form a helical membrane-spanning segment. The Cytoplasmic segment spans residues 1233-1256 (KQYRVYCLIRGVEELHDMSIENSY). The helical transmembrane segment at 1257-1277 (LLKLQSFILIIPAILIAVSVI) threads the bilayer. The Extracellular portion of the chain corresponds to 1278–1304 (ATRMHRKYNFDLQKETIQAYCYSKNFY). A helical transmembrane segment spans residues 1305–1325 (IIFICLALYEFSILLYGCWIV). At 1326 to 1340 (IKCRQYRSFPGSFNE) the chain is on the cytoplasmic side. The chain crosses the membrane as a helical span at residues 1341–1361 (FFYIGVLIYVLTVILVVSIPI). Topologically, residues 1362-1372 (GFALLNSALTD) are extracellular. The chain crosses the membrane as a helical span at residues 1373-1393 (FLLYSIPILVLIVAIIGLLFA). Residues 1394–1604 (PKFYFLFRTD…KSSQNSPLLD (211 aa)) lie on the Cytoplasmic side of the membrane. Positions 1457 to 1604 (TGSNTSDDVS…KSSQNSPLLD (148 aa)) are disordered. Composition is skewed to low complexity over residues 1471-1527 (FDSP…NKNN) and 1534-1556 (SSSN…GRSS). Over residues 1563-1572 (NNKKNRRKNS) the composition is skewed to basic residues. Polar residues predominate over residues 1573–1584 (LRTPILNSLLSP).

This sequence belongs to the G-protein coupled receptor 3 family. GABA-B receptor subfamily.

The protein resides in the membrane. The sequence is that of Metabotropic glutamate receptor-like protein R (grlR) from Dictyostelium discoideum (Social amoeba).